Here is a 432-residue protein sequence, read N- to C-terminus: Enolase (432 aa).

(2R)-2-phosphoglycerate is bound at residue Q163. The Proton donor role is filled by E205. 3 residues coordinate Mg(2+): D241, E289, and D316. Residues K341, R370, S371, and K392 each coordinate (2R)-2-phosphoglycerate. K341 (proton acceptor) is an active-site residue.

It belongs to the enolase family. The cofactor is Mg(2+).

The protein localises to the cytoplasm. The protein resides in the secreted. It is found in the cell surface. The catalysed reaction is (2R)-2-phosphoglycerate = phosphoenolpyruvate + H2O. Its pathway is carbohydrate degradation; glycolysis; pyruvate from D-glyceraldehyde 3-phosphate: step 4/5. Functionally, catalyzes the reversible conversion of 2-phosphoglycerate (2-PG) into phosphoenolpyruvate (PEP). It is essential for the degradation of carbohydrates via glycolysis. This Treponema pallidum (strain Nichols) protein is Enolase.